Here is a 385-residue protein sequence, read N- to C-terminus: MKTELNLHGRSLTLHRFPKRSNETLQAWDAGDEYLINHVEEMALPDHQNIVVINDNFGALACWFSEKHHVTFMSDSFVSHKGAQKNLEDNQCNKVAFLTTMDSIPANTDLVLVQLPKSNRHLVWILSQLRKILPTACPVIAVNKAKEIHTSTLKLFEKYLGETKTSLAWKKHRLVFSQANAEPRIEVDPITAWDVEGEHIQLKNLPNVYSGESLDLGARFMLQHIPQDASINHIIDLGCGNGVLSVKAGQLNPNVRLTCVDESFMALESAKQNLLDNLGEGRDIQCVANNCLDGFKPDSCDLIMCNPPFHQQHAITDHIAWQMFCDAKQILNQNGKLLVIGNRHLGYDAKLKRLFGDKNVKLIASNNKFVILQATKNPAKLSAKQ.

It belongs to the methyltransferase superfamily. RlmG family.

The protein resides in the cytoplasm. The enzyme catalyses guanosine(1835) in 23S rRNA + S-adenosyl-L-methionine = N(2)-methylguanosine(1835) in 23S rRNA + S-adenosyl-L-homocysteine + H(+). Functionally, specifically methylates the guanine in position 1835 (m2G1835) of 23S rRNA. The protein is Ribosomal RNA large subunit methyltransferase G of Vibrio parahaemolyticus serotype O3:K6 (strain RIMD 2210633).